The sequence spans 456 residues: Cytochrome P450 monooxygenase avaH (456 aa).

The chain crosses the membrane as a helical span at residues 243–263 (LMSYFVSVFLVNVALFNAVSI). Residue Cys-403 coordinates heme.

This sequence belongs to the cytochrome P450 family. It depends on heme as a cofactor.

The protein resides in the membrane. Its pathway is secondary metabolite biosynthesis. In terms of biological role, cytochrome P450 monooxygenase; part of the cluster that mediates the biosynthesis of a highly modified cyclo-arginine-tryptophan dipeptide (cRW). The first step of the pathway is perfornmed by the arginine-containing cyclodipeptide synthase (RCPDS) avaA that acts as the scaffold-generating enzyme and is responsible for formation of the cyclo-Arg-Trp (cRW) diketopiperazine. AvaB then acts as a multifunctional flavoenzyme that is responsible for generating the cyclo-Arg-formylkynurenine DKP, which can be deformylated by avaC. AvaB then further catalyzes an additional N-oxidation followed by cyclization and dehydration. The next step is an N-acetylation of the guanidine group catalyzed by the arginine N-acetyltransferase avaD. The roles of the additional enzymes identified within the ava cluster still have to be determined. This is Cytochrome P450 monooxygenase avaH from Aspergillus versicolor.